The sequence spans 493 residues: Cytochrome c-552 (493 aa).

Residues 1–25 (MEKKLKSWQGWLLFCGAMAVVFVLG) form the signal peptide. His-116 contacts heme c. Heme is bound by residues Cys-144, Cys-147, and Lys-148. Heme c is bound by residues Cys-182, Cys-185, His-186, Cys-224, Cys-227, and His-228. The Ca(2+) site is built by Glu-230, Tyr-231, Lys-276, and Gln-278. Tyr-231 is a binding site for substrate. His-279 provides a ligand contact to substrate. 9 residues coordinate heme c: His-290, Cys-297, Cys-300, His-301, His-315, Cys-328, Cys-331, His-332, and His-407.

It belongs to the cytochrome c-552 family. The cofactor is Ca(2+). Heme c is required as a cofactor.

The protein localises to the periplasm. The enzyme catalyses 6 Fe(III)-[cytochrome c] + NH4(+) + 2 H2O = 6 Fe(II)-[cytochrome c] + nitrite + 8 H(+). The protein operates within nitrogen metabolism; nitrate reduction (assimilation). In terms of biological role, catalyzes the reduction of nitrite to ammonia, consuming six electrons in the process. The sequence is that of Cytochrome c-552 from Bacteroides fragilis (strain ATCC 25285 / DSM 2151 / CCUG 4856 / JCM 11019 / LMG 10263 / NCTC 9343 / Onslow / VPI 2553 / EN-2).